Consider the following 480-residue polypeptide: Proline--tRNA ligase (480 aa).

Belongs to the class-II aminoacyl-tRNA synthetase family. ProS type 3 subfamily. Homodimer.

Its subcellular location is the cytoplasm. It carries out the reaction tRNA(Pro) + L-proline + ATP = L-prolyl-tRNA(Pro) + AMP + diphosphate. Functionally, catalyzes the attachment of proline to tRNA(Pro) in a two-step reaction: proline is first activated by ATP to form Pro-AMP and then transferred to the acceptor end of tRNA(Pro). This is Proline--tRNA ligase from Alkaliphilus oremlandii (strain OhILAs) (Clostridium oremlandii (strain OhILAs)).